Here is a 542-residue protein sequence, read N- to C-terminus: Putative leucine aminopeptidase 1 (542 aa).

Lys-294 and Asp-299 together coordinate Mn(2+). Lys-323 is an active-site residue. Positions 336, 396, and 398 each coordinate Mn(2+). The active site involves Arg-400.

Belongs to the peptidase M17 family. Homohexamer (dimer of homotrimers). The cofactor is Mn(2+).

Its subcellular location is the cytoplasm. The catalysed reaction is Release of an N-terminal amino acid, Xaa-|-Yaa-, in which Xaa is preferably Leu, but may be other amino acids including Pro although not Arg or Lys, and Yaa may be Pro. Amino acid amides and methyl esters are also readily hydrolyzed, but rates on arylamides are exceedingly low.. The enzyme catalyses Release of N-terminal proline from a peptide.. Functionally, presumably involved in the processing and regular turnover of intracellular proteins. Catalyzes the removal of unsubstituted N-terminal amino acids from various peptides. This Oryza sativa subsp. japonica (Rice) protein is Putative leucine aminopeptidase 1.